The sequence spans 317 residues: Taste receptor type 2 member 14 (317 aa).

Residues 1–7 (MGDVIKS) are Extracellular-facing. A helical membrane pass occupies residues 8 to 28 (IFTFVLIVEFIIGNLGNSFIA). Residues 29–55 (LVNCIDWVKGRKISSVDQILTALAISR) lie on the Cytoplasmic side of the membrane. The chain crosses the membrane as a helical span at residues 56 to 76 (ISLVWLIFGSWCVSVFLPALF). Residues 77–87 (ATEKMFRMLTN) lie on the Extracellular side of the membrane. Positions 86 and 89 each coordinate cholesterol. A helical membrane pass occupies residues 88–108 (IWTVINHFSVWLATGLGTFYF). The Cytoplasmic portion of the chain corresponds to 109–129 (LKIANFSNSIFLYLKWRVKKV). Residues 130 to 150 (VLVLLLVTSVFLFLNIALINI) traverse the membrane as a helical segment. Topologically, residues 151-184 (HINASINGYRRNKTCSSDSSNFTRFSSLIVLTST) are extracellular. Residues N153, N162, and N171 are each glycosylated (N-linked (GlcNAc...) asparagine). Cholesterol is bound at residue V180. A helical transmembrane segment spans residues 185-205 (VFIFIPFTLSLAMFLLLIFSL). Residues 206-232 (WKHRKKMQHXVKRSGDASTKAHRGVKS) lie on the Cytoplasmic side of the membrane. Residues 233-253 (VITFFLLYAIFCLSFFISVWT) traverse the membrane as a helical segment. Over 254–261 (SERLEENL) the chain is Extracellular. The chain crosses the membrane as a helical span at residues 262–282 (IILSQVMGMAYPSCHSCVLIL). Cholesterol-binding residues include S265 and M268. Topologically, residues 283–317 (GNKKLRQASLSVLLWLRYMFKDGEPSGHKEFRESS) are cytoplasmic.

This sequence belongs to the G-protein coupled receptor T2R family. As to quaternary structure, core component of the TAS2R14-GNAI1 complex, consisting of TAS2R14, GNAI1, GNB1 and GNG2; within the complex interacts with GNAI1. Core component of the TAS2R14-GNAT3 complex, consisting of TAS2R14, GNAT3, GNB1 and GNG2; within the complex interacts with GNAT3. Core component of the TAS2R14-GNAS2 complex, consisting of TAS2R14, GNAS2, GNB1 and GNG2; within the complex interacts with GNAS2.

The protein resides in the membrane. The enzyme catalyses Ca(2+)(in) = Ca(2+)(out). The catalysed reaction is 3',5'-cyclic AMP(in) = 3',5'-cyclic AMP(out). With respect to regulation, basal activity is enhanced by binding to bitter tastants, such as flufenamic acid and aristolochic acid. Regulated by cholesterol in a concentration-dependent manner. Functionally, gustducin-linked G-protein coupled receptor that plays a role in the perception of bitterness. The activity of this receptor stimulates GNAT3, activating the gustducin G-protein pathway. Likely plays a role in sensing the chemical composition of the gastrointestinal content and other extra-oral tissues via the inhibitory G-protein pathways. This chain is Taste receptor type 2 member 14 (TAS2R14), found in Gorilla gorilla gorilla (Western lowland gorilla).